The sequence spans 93 residues: Histone H2B (93 aa).

Over residues 1 to 12 (MPEPAKSAPAPK) the composition is skewed to low complexity. The disordered stretch occupies residues 1 to 31 (MPEPAKSAPAPKKGSKKAVTKTQKKGDKKRX). 2 positions are modified to N6-acetyllysine: Lys6 and Lys13. Over residues 13 to 28 (KGSKKAVTKTQKKGDK) the composition is skewed to basic residues. At Ser15 the chain carries Phosphoserine. N6-acetyllysine is present on residues Lys16 and Lys21.

This sequence belongs to the histone H2B family. The nucleosome is a histone octamer containing two molecules each of H2A, H2B, H3 and H4 assembled in one H3-H4 heterotetramer and two H2A-H2B heterodimers. The octamer wraps approximately 147 bp of DNA. In terms of processing, monoubiquitination at the C-terminal Lys gives a specific tag for epigenetic transcriptional activation and is also prerequisite for histone H3 'Lys-4' and 'Lys-79' methylation. Post-translationally, phosphorylated on Ser-15 during apoptosis; which facilitates apoptotic chromatin condensation.

Its subcellular location is the nucleus. The protein localises to the chromosome. Functionally, core component of nucleosome. Nucleosomes wrap and compact DNA into chromatin, limiting DNA accessibility to the cellular machineries which require DNA as a template. Histones thereby play a central role in transcription regulation, DNA repair, DNA replication and chromosomal stability. DNA accessibility is regulated via a complex set of post-translational modifications of histones, also called histone code, and nucleosome remodeling. In Crocodylus niloticus (Nile crocodile), this protein is Histone H2B.